A 102-amino-acid chain; its full sequence is Protein PAPPAS (102 aa).

2 consecutive transmembrane segments (helical) span residues 13–33 (LFLTTVAALPIWNPISEFVKW) and 82–102 (IGSDIIWWFLKLFLVSFFFFF).

As to expression, expressed in placenta with lower expression in brain, kidney and testis.

The protein localises to the endoplasmic reticulum membrane. The sequence is that of Protein PAPPAS (PAPPA-AS1) from Homo sapiens (Human).